A 258-amino-acid polypeptide reads, in one-letter code: UDP-N-acetylenolpyruvoylglucosamine reductase (258 aa).

R142 is an active-site residue. The Proton donor role is filled by S184. E254 is an active-site residue.

Belongs to the MurB family. FAD serves as cofactor.

It is found in the cytoplasm. It carries out the reaction UDP-N-acetyl-alpha-D-muramate + NADP(+) = UDP-N-acetyl-3-O-(1-carboxyvinyl)-alpha-D-glucosamine + NADPH + H(+). Its pathway is cell wall biogenesis; peptidoglycan biosynthesis. In terms of biological role, cell wall formation. This Campylobacter jejuni subsp. jejuni serotype O:2 (strain ATCC 700819 / NCTC 11168) protein is UDP-N-acetylenolpyruvoylglucosamine reductase.